The chain runs to 421 residues: Enolase (421 aa).

A (2R)-2-phosphoglycerate-binding site is contributed by Gln-165. Glu-207 (proton donor) is an active-site residue. Positions 244, 285, and 312 each coordinate Mg(2+). 4 residues coordinate (2R)-2-phosphoglycerate: Lys-337, Arg-366, Ser-367, and Lys-388. Catalysis depends on Lys-337, which acts as the Proton acceptor.

It belongs to the enolase family. Mg(2+) serves as cofactor.

It is found in the cytoplasm. The protein resides in the secreted. It localises to the cell surface. The catalysed reaction is (2R)-2-phosphoglycerate = phosphoenolpyruvate + H2O. Its pathway is carbohydrate degradation; glycolysis; pyruvate from D-glyceraldehyde 3-phosphate: step 4/5. In terms of biological role, catalyzes the reversible conversion of 2-phosphoglycerate (2-PG) into phosphoenolpyruvate (PEP). It is essential for the degradation of carbohydrates via glycolysis. This Ehrlichia canis (strain Jake) protein is Enolase.